Consider the following 565-residue polypeptide: NAD-dependent malic enzyme (565 aa).

Y104 (proton donor) is an active-site residue. Position 157 (R157) interacts with NAD(+). K175 functions as the Proton acceptor in the catalytic mechanism. The a divalent metal cation site is built by E246, D247, and D270. NAD(+) is bound by residues D270 and N418.

It belongs to the malic enzymes family. Homotetramer. The cofactor is Mg(2+). It depends on Mn(2+) as a cofactor.

It carries out the reaction (S)-malate + NAD(+) = pyruvate + CO2 + NADH. It catalyses the reaction oxaloacetate + H(+) = pyruvate + CO2. The chain is NAD-dependent malic enzyme from Escherichia coli O157:H7.